The primary structure comprises 425 residues: Kynurenine/alpha-aminoadipate aminotransferase, mitochondrial (425 aa).

A mitochondrion-targeting transit peptide spans 1–29 (MNYSRFLTATSLARKPSPIRTTADILSKA). Arg20 serves as a coordination point for substrate. Ser40 is subject to Phosphoserine. At Lys69 the chain carries N6-acetyllysine. A substrate-binding site is contributed by Tyr74. An N6-succinyllysine modification is found at Lys172. Lys179 carries the N6-acetyllysine modification. Asn202 is a substrate binding site. An N6-(pyridoxal phosphate)lysine; alternate modification is found at Lys263. 2 positions are modified to N6-acetyllysine; alternate: Lys263 and Lys339. N6-succinyllysine; alternate is present on residues Lys263 and Lys339. At Lys351 the chain carries N6-acetyllysine. Lys367 carries the post-translational modification N6-acetyllysine; alternate. Lys367 carries the post-translational modification N6-succinyllysine; alternate. Substrate is bound at residue Arg399. Lys422 carries the post-translational modification N6-acetyllysine.

Belongs to the class-I pyridoxal-phosphate-dependent aminotransferase family. In terms of assembly, homodimer. Pyridoxal 5'-phosphate serves as cofactor. As to expression, expressed mainly in kidney and to a lesser amount in liver and brain.

The protein localises to the mitochondrion. It carries out the reaction L-kynurenine + 2-oxoglutarate = kynurenate + L-glutamate + H2O. The enzyme catalyses L-2-aminoadipate + 2-oxoglutarate = 2-oxoadipate + L-glutamate. It catalyses the reaction glycine + 2-oxoglutarate = glyoxylate + L-glutamate. The catalysed reaction is L-kynurenine + glyoxylate = kynurenate + glycine + H2O. It carries out the reaction 3-hydroxy-L-kynurenine + glyoxylate = xanthurenate + glycine + H2O. The enzyme catalyses 2-oxohexanoate + L-kynurenine = L-2-aminohexanoate + kynurenate + H2O. It catalyses the reaction 3-phenylpyruvate + L-kynurenine = kynurenate + L-phenylalanine + H2O. The catalysed reaction is 4-methylsulfanyl-2-oxobutanoate + L-kynurenine = kynurenate + L-methionine + H2O. It carries out the reaction 2-oxo-3-sulfanylpropanoate + L-kynurenine = kynurenate + L-cysteine + H2O. The enzyme catalyses indole-3-pyruvate + L-kynurenine = kynurenate + L-tryptophan + H2O. It catalyses the reaction 2-oxopentanoate + L-kynurenine = L-2-aminopentanoate + kynurenate + H2O. The catalysed reaction is 4-methyl-2-oxopentanoate + L-kynurenine = kynurenate + L-leucine + H2O. It carries out the reaction glyoxylate + L-methionine = 4-methylsulfanyl-2-oxobutanoate + glycine. The enzyme catalyses L-2-aminoadipate + glyoxylate = 2-oxoadipate + glycine. It catalyses the reaction L-tyrosine + glyoxylate = 3-(4-hydroxyphenyl)pyruvate + glycine. The catalysed reaction is glyoxylate + L-phenylalanine = 3-phenylpyruvate + glycine. It carries out the reaction L-tryptophan + glyoxylate = indole-3-pyruvate + glycine. The enzyme catalyses L-leucine + glyoxylate = 4-methyl-2-oxopentanoate + glycine. It catalyses the reaction 2-oxobutanoate + L-kynurenine = (2S)-2-aminobutanoate + kynurenate + H2O. The catalysed reaction is 2-oxoadipate + L-kynurenine = L-2-aminoadipate + kynurenate + H2O. The protein operates within amino-acid degradation; L-lysine degradation via saccharopine pathway; glutaryl-CoA from L-lysine: step 4/6. In terms of biological role, transaminase with broad substrate specificity. Has transaminase activity towards aminoadipate, kynurenine, methionine and glutamate. Shows activity also towards tryptophan, aspartate and hydroxykynurenine. Accepts a variety of oxo-acids as amino-group acceptors, with a preference for 2-oxoglutarate, 2-oxocaproic acid, phenylpyruvate and alpha-oxo-gamma-methiol butyric acid. Can also use glyoxylate as amino-group acceptor (in vitro). In Mus musculus (Mouse), this protein is Kynurenine/alpha-aminoadipate aminotransferase, mitochondrial.